A 119-amino-acid chain; its full sequence is Small ribosomal subunit protein uS13 (119 aa).

The interval 92 to 119 (RRGLPVRGQRTKTNARTRKGPRKAIRAR) is disordered.

This sequence belongs to the universal ribosomal protein uS13 family. In terms of assembly, part of the 30S ribosomal subunit. Forms a loose heterodimer with protein S19. Forms two bridges to the 50S subunit in the 70S ribosome.

Functionally, located at the top of the head of the 30S subunit, it contacts several helices of the 16S rRNA. In the 70S ribosome it contacts the 23S rRNA (bridge B1a) and protein L5 of the 50S subunit (bridge B1b), connecting the 2 subunits; these bridges are implicated in subunit movement. Contacts the tRNAs in the A and P-sites. The polypeptide is Small ribosomal subunit protein uS13 (Nitrosomonas eutropha (strain DSM 101675 / C91 / Nm57)).